The following is a 188-amino-acid chain: MPSISTVSKGSIIRFKGEPHSIESLIHRTPGNLRAFYQANMKNLKTGRNVEYRFSSSETVDVIVTERKQYQYLYRDGSDFVMMDNNTFEQINVPEVALGEGANFMKDNINVTIVFSDDGSILQVELPTFVEVEVTDTNPASKDDRATSGTKPAIVETGAEVNVPMFIQIGSVIRVDTRTGEYIERVKK.

Belongs to the elongation factor P family.

The protein localises to the cytoplasm. It participates in protein biosynthesis; polypeptide chain elongation. Functionally, involved in peptide bond synthesis. Stimulates efficient translation and peptide-bond synthesis on native or reconstituted 70S ribosomes in vitro. Probably functions indirectly by altering the affinity of the ribosome for aminoacyl-tRNA, thus increasing their reactivity as acceptors for peptidyl transferase. This is Elongation factor P from Chlorobium chlorochromatii (strain CaD3).